Consider the following 299-residue polypeptide: UDP-N-acetylenolpyruvoylglucosamine reductase (299 aa).

In terms of domain architecture, FAD-binding PCMH-type spans 21 to 189; sequence RVGGPAQWLL…LSARFRLEPG (169 aa). The active site involves R168. Residue S219 is the Proton donor of the active site. The active site involves E289.

This sequence belongs to the MurB family. The cofactor is FAD.

The protein localises to the cytoplasm. The catalysed reaction is UDP-N-acetyl-alpha-D-muramate + NADP(+) = UDP-N-acetyl-3-O-(1-carboxyvinyl)-alpha-D-glucosamine + NADPH + H(+). It participates in cell wall biogenesis; peptidoglycan biosynthesis. In terms of biological role, cell wall formation. In Parasynechococcus marenigrum (strain WH8102), this protein is UDP-N-acetylenolpyruvoylglucosamine reductase.